A 121-amino-acid chain; its full sequence is Large ribosomal subunit protein bL12 (121 aa).

This sequence belongs to the bacterial ribosomal protein bL12 family. In terms of assembly, homodimer. Part of the ribosomal stalk of the 50S ribosomal subunit. Forms a multimeric L10(L12)X complex, where L10 forms an elongated spine to which 2 to 4 L12 dimers bind in a sequential fashion. Binds GTP-bound translation factors.

In terms of biological role, forms part of the ribosomal stalk which helps the ribosome interact with GTP-bound translation factors. Is thus essential for accurate translation. The sequence is that of Large ribosomal subunit protein bL12 from Limosilactobacillus reuteri (strain DSM 20016) (Lactobacillus reuteri).